The following is a 206-amino-acid chain: Octanoyltransferase (206 aa).

The BPL/LPL catalytic domain occupies 30–206 (PETNDEIWLV…EFVTLLNNSI (177 aa)). Residues 69 to 76 (RGGQVTYH), 137 to 139 (SLG), and 150 to 152 (GIA) contribute to the substrate site. Catalysis depends on Cys-168, which acts as the Acyl-thioester intermediate.

Belongs to the LipB family.

It is found in the cytoplasm. The catalysed reaction is octanoyl-[ACP] + L-lysyl-[protein] = N(6)-octanoyl-L-lysyl-[protein] + holo-[ACP] + H(+). Its pathway is protein modification; protein lipoylation via endogenous pathway; protein N(6)-(lipoyl)lysine from octanoyl-[acyl-carrier-protein]: step 1/2. Catalyzes the transfer of endogenously produced octanoic acid from octanoyl-acyl-carrier-protein onto the lipoyl domains of lipoate-dependent enzymes. Lipoyl-ACP can also act as a substrate although octanoyl-ACP is likely to be the physiological substrate. The protein is Octanoyltransferase of Francisella tularensis subsp. holarctica (strain FTNF002-00 / FTA).